We begin with the raw amino-acid sequence, 85 residues long: Probable [Fe-S]-dependent transcriptional repressor (85 aa).

Positions 56, 61, 64, and 71 each coordinate iron-sulfur cluster.

Belongs to the FeoC family.

Functionally, may function as a transcriptional regulator that controls feoABC expression. The sequence is that of Probable [Fe-S]-dependent transcriptional repressor from Yersinia pseudotuberculosis serotype O:1b (strain IP 31758).